Consider the following 283-residue polypeptide: Elongation factor Ts (283 aa).

Residues 80 to 83 (TDFV) are involved in Mg(2+) ion dislocation from EF-Tu.

The protein belongs to the EF-Ts family.

Its subcellular location is the cytoplasm. Associates with the EF-Tu.GDP complex and induces the exchange of GDP to GTP. It remains bound to the aminoacyl-tRNA.EF-Tu.GTP complex up to the GTP hydrolysis stage on the ribosome. The sequence is that of Elongation factor Ts from Haemophilus influenzae (strain PittGG).